A 157-amino-acid polypeptide reads, in one-letter code: Transcription elongation factor GreA (157 aa).

A coiled-coil region spans residues 13 to 75 (RARLEAELEE…EIKSILARAQ (63 aa)).

The protein belongs to the GreA/GreB family.

Its function is as follows. Necessary for efficient RNA polymerase transcription elongation past template-encoded arresting sites. The arresting sites in DNA have the property of trapping a certain fraction of elongating RNA polymerases that pass through, resulting in locked ternary complexes. Cleavage of the nascent transcript by cleavage factors such as GreA or GreB allows the resumption of elongation from the new 3'terminus. GreA releases sequences of 2 to 3 nucleotides. The protein is Transcription elongation factor GreA of Roseiflexus castenholzii (strain DSM 13941 / HLO8).